Reading from the N-terminus, the 508-residue chain is Photosystem II CP47 reaction center protein (508 aa).

A run of 6 helical transmembrane segments spans residues A21–S36, I101–W115, G140–F156, I203–S218, V237–V252, and T457–R472.

Belongs to the PsbB/PsbC family. PsbB subfamily. As to quaternary structure, PSII is composed of 1 copy each of membrane proteins PsbA, PsbB, PsbC, PsbD, PsbE, PsbF, PsbH, PsbI, PsbJ, PsbK, PsbL, PsbM, PsbT, PsbX, PsbY, PsbZ, Psb30/Ycf12, at least 3 peripheral proteins of the oxygen-evolving complex and a large number of cofactors. It forms dimeric complexes. The cofactor is Binds multiple chlorophylls. PSII binds additional chlorophylls, carotenoids and specific lipids..

It is found in the plastid. It localises to the chloroplast thylakoid membrane. One of the components of the core complex of photosystem II (PSII). It binds chlorophyll and helps catalyze the primary light-induced photochemical processes of PSII. PSII is a light-driven water:plastoquinone oxidoreductase, using light energy to abstract electrons from H(2)O, generating O(2) and a proton gradient subsequently used for ATP formation. This is Photosystem II CP47 reaction center protein from Anthoceros angustus (Hornwort).